The following is a 197-amino-acid chain: Sialomucin core protein 24 (197 aa).

The first 23 residues, 1–23 (MSGSSRRLLWAATCLAVLCVSAA), serve as a signal peptide directing secretion. Residues 24 to 162 (QPNITTLAPN…SQPERKSTFD (139 aa)) lie on the Extracellular side of the membrane. Asn26, Asn33, Asn69, Asn75, Asn87, Asn98, Asn103, Asn120, and Asn146 each carry an N-linked (GlcNAc...) asparagine glycan. The tract at residues 116-156 (PVPTNSTAKPTTRPSSPTPTPSVVTSAGTTNTTLTPTSQPE) is disordered. Residues 121-152 (STAKPTTRPSSPTPTPSVVTSAGTTNTTLTPT) are compositionally biased toward low complexity. A helical transmembrane segment spans residues 163 to 183 (AASFIGGIVLVLGVQAVIFFL). At 184–197 (YKFCKSKERNYHTL) the chain is on the cytoplasmic side. Positions 191 to 197 (ERNYHTL) are required for endosomal and lysosomal localization.

The protein belongs to the CD164 family. As to quaternary structure, interacts with CXCR4. Post-translationally, highly N- and O-glycosylated; contains sialic acid. As to expression, expressed at high levels in the submaxillary gland and kidney, at moderate levels in the brain, heart, lung, liver, intestine, testis, muscle and bone marrow, and at low levels in the pancreas, spleen and thymus. In the ear, expressed in the inner and outer hair cells of the organ of Corti, cells of Kolliker's organ, cells in the lateral cochlear wall behind the spiral prominence and cells of the stria vascularis.

The protein localises to the lysosome membrane. The protein resides in the endosome membrane. Its subcellular location is the cell membrane. Functionally, sialomucin that may play a key role in hematopoiesis. May be involved in cell adhesion. Promotes myogenesis by enhancing CXCR4-dependent cell motility. Positively regulates myoblast migration and promotes myoblast fusion into myotubes. This chain is Sialomucin core protein 24 (Cd164), found in Mus musculus (Mouse).